The sequence spans 392 residues: Chaperone protein DnaJ 2 (392 aa).

The J domain maps to 10–75; the sequence is DFYKELGVSS…AKRKEYDETR (66 aa). The segment at 161–239 adopts a CR-type zinc-finger fold; that stretch reads GVAMPLRLTS…CKGTGVTTRT (79 aa). Zn(2+) contacts are provided by Cys174, Cys177, Cys191, Cys194, Cys213, Cys216, Cys227, and Cys230. CXXCXGXG motif repeat units lie at residues 174–181, 191–198, 213–220, and 227–234; these read CTNCHGSG, CPTCNGSG, CTDCRGSG, and CDECKGTG.

Belongs to the DnaJ family. Homodimer. Zn(2+) is required as a cofactor.

It is found in the cytoplasm. In terms of biological role, participates actively in the response to hyperosmotic and heat shock by preventing the aggregation of stress-denatured proteins and by disaggregating proteins, also in an autonomous, DnaK-independent fashion. Unfolded proteins bind initially to DnaJ; upon interaction with the DnaJ-bound protein, DnaK hydrolyzes its bound ATP, resulting in the formation of a stable complex. GrpE releases ADP from DnaK; ATP binding to DnaK triggers the release of the substrate protein, thus completing the reaction cycle. Several rounds of ATP-dependent interactions between DnaJ, DnaK and GrpE are required for fully efficient folding. Also involved, together with DnaK and GrpE, in the DNA replication of plasmids through activation of initiation proteins. The sequence is that of Chaperone protein DnaJ 2 from Mycolicibacterium paratuberculosis (strain ATCC BAA-968 / K-10) (Mycobacterium paratuberculosis).